The following is a 105-amino-acid chain: Phosphoribosyl-ATP pyrophosphatase (105 aa).

It belongs to the PRA-PH family.

The protein resides in the cytoplasm. It catalyses the reaction 1-(5-phospho-beta-D-ribosyl)-ATP + H2O = 1-(5-phospho-beta-D-ribosyl)-5'-AMP + diphosphate + H(+). Its pathway is amino-acid biosynthesis; L-histidine biosynthesis; L-histidine from 5-phospho-alpha-D-ribose 1-diphosphate: step 2/9. The chain is Phosphoribosyl-ATP pyrophosphatase from Ruegeria sp. (strain TM1040) (Silicibacter sp.).